The following is a 197-amino-acid chain: Protein GrpE (197 aa).

The interval 1–39 (MSSKEQKTPEGQAPEEIIMDQHEEIEAVEPEASAEQVDP) is disordered.

Belongs to the GrpE family. Homodimer.

The protein resides in the cytoplasm. In terms of biological role, participates actively in the response to hyperosmotic and heat shock by preventing the aggregation of stress-denatured proteins, in association with DnaK and GrpE. It is the nucleotide exchange factor for DnaK and may function as a thermosensor. Unfolded proteins bind initially to DnaJ; upon interaction with the DnaJ-bound protein, DnaK hydrolyzes its bound ATP, resulting in the formation of a stable complex. GrpE releases ADP from DnaK; ATP binding to DnaK triggers the release of the substrate protein, thus completing the reaction cycle. Several rounds of ATP-dependent interactions between DnaJ, DnaK and GrpE are required for fully efficient folding. This is Protein GrpE from Escherichia coli O45:K1 (strain S88 / ExPEC).